Consider the following 628-residue polypeptide: Very-long-chain aldehyde decarbonylase GL1-2 (628 aa).

A run of 5 helical transmembrane segments spans residues 37–57 (GAAPVGSWWLHLLLLFAARGL), 131–151 (GWAIALLLHVLVAEPLFYWAH), 191–211 (VVIGVPLAGAFLMGVGSVGLV), 299–319 (DFVFLAHVVDIMASMHVPFVL), and 331–351 (FVLLPFWPVAFGFMLLMWCCS). A Fatty acid hydroxylase domain is found at 137-277 (LLHVLVAEPL…MPIFDLLGGT (141 aa)).

This sequence belongs to the sterol desaturase family. As to quaternary structure, homodimer.

Its subcellular location is the endoplasmic reticulum membrane. The enzyme catalyses a long-chain fatty aldehyde + 2 NADPH + O2 + H(+) = a long-chain alkane + formate + 2 NADP(+) + H2O. Functionally, aldehyde decarbonylase involved in the conversion of aldehydes to alkanes. Core component of a very-long-chain alkane synthesis complex. The sequence is that of Very-long-chain aldehyde decarbonylase GL1-2 from Oryza sativa subsp. indica (Rice).